We begin with the raw amino-acid sequence, 652 residues long: Fimbrin-4 (652 aa).

Calponin-homology (CH) domains lie at E116–L233, L261–N364, S388–M494, and D509–L617. Actin-binding regions lie at residues E116–N364 and S388–L617. Residues T623–V652 are disordered. Polar residues predominate over residues I640–V652.

As to quaternary structure, interacts with F-actin.

It is found in the cytoplasm. It localises to the cytoskeleton. Cross-links actin filaments (F-actin). Stabilizes and prevents F-actin depolymerization mediated by profilin. May regulate actin cytoarchitecture, cell cycle, cell division, cell elongation and cytoplasmic tractus. This is Fimbrin-4 from Arabidopsis thaliana (Mouse-ear cress).